The following is a 120-amino-acid chain: Large ribosomal subunit protein bL12 (120 aa).

The protein belongs to the bacterial ribosomal protein bL12 family. In terms of assembly, homodimer. Part of the ribosomal stalk of the 50S ribosomal subunit. Forms a multimeric L10(L12)X complex, where L10 forms an elongated spine to which 2 to 4 L12 dimers bind in a sequential fashion. Binds GTP-bound translation factors.

Forms part of the ribosomal stalk which helps the ribosome interact with GTP-bound translation factors. Is thus essential for accurate translation. This is Large ribosomal subunit protein bL12 from Lachnoclostridium phytofermentans (strain ATCC 700394 / DSM 18823 / ISDg) (Clostridium phytofermentans).